The following is a 588-amino-acid chain: uncharacterized protein (588 aa).

This is an uncharacterized protein from Schizosaccharomyces pombe (strain 972 / ATCC 24843) (Fission yeast).